A 509-amino-acid polypeptide reads, in one-letter code: tRNA-2-methylthio-N(6)-dimethylallyladenosine synthase (509 aa).

A compositionally biased stretch (polar residues) spans 1–15 (MNEQQRLASQQANSS). The tract at residues 1–25 (MNEQQRLASQQANSSTKKEEKDYSK) is disordered. The span at 16-25 (TKKEEKDYSK) shows a compositional bias: basic and acidic residues. The MTTase N-terminal domain maps to 66–184 (RKFYIRTYGC…LPYILKDAMF (119 aa)). [4Fe-4S] cluster contacts are provided by C75, C111, C145, C221, C225, and C228. Positions 207–437 (RRGDIKAWVN…NTLVNTLAIE (231 aa)) constitute a Radical SAM core domain. The TRAM domain occupies 440 to 503 (SRYKGQIVEV…TWSLNGELVE (64 aa)).

It belongs to the methylthiotransferase family. MiaB subfamily. Monomer. [4Fe-4S] cluster is required as a cofactor.

The protein localises to the cytoplasm. It catalyses the reaction N(6)-dimethylallyladenosine(37) in tRNA + (sulfur carrier)-SH + AH2 + 2 S-adenosyl-L-methionine = 2-methylsulfanyl-N(6)-dimethylallyladenosine(37) in tRNA + (sulfur carrier)-H + 5'-deoxyadenosine + L-methionine + A + S-adenosyl-L-homocysteine + 2 H(+). Functionally, catalyzes the methylthiolation of N6-(dimethylallyl)adenosine (i(6)A), leading to the formation of 2-methylthio-N6-(dimethylallyl)adenosine (ms(2)i(6)A) at position 37 in tRNAs that read codons beginning with uridine. This is tRNA-2-methylthio-N(6)-dimethylallyladenosine synthase from Bacillus cereus (strain B4264).